A 236-amino-acid chain; its full sequence is Envelope glycoprotein (236 aa).

Over 1–202 (CQFDGNTISG…EWILGVLNGN (202 aa)) the chain is Lumenal. The N-linked (GlcNAc...) asparagine; by host glycan is linked to N25. 5 disulfide bridges follow: C67–C97, C90–C142, C107–C112, C143–C148, and C182–C186. A helical transmembrane segment spans residues 203-223 (WMVVAVLIALLILSILLFTLC). Binding to the ribonucleoprotein stretches follow at residues 219–231 (LFTL…PSYR) and 219–236 (LFTL…EHKP). The Cytoplasmic segment spans residues 224–236 (CPRRPSYRKEHKP).

This sequence belongs to the hantavirus envelope glycoprotein family. Homodimer. Homotetramer; forms heterotetrameric Gn-Gc spikes in the pre-fusion conformation. Homotrimer; forms homotrimer in the post-fusion conformation at acidic pH. Interacts (via C-terminus) with the nucleoprotein. Envelope polyprotein precursor is quickly cleaved in vivo just after synthesis, presumably by host signal peptidase.

Its subcellular location is the virion membrane. It localises to the host cell surface. The protein resides in the host Golgi apparatus membrane. It is found in the host endoplasmic reticulum membrane. In terms of biological role, forms homotetramers with glycoprotein N at the surface of the virion. Attaches the virion to host cell receptors including integrin ITGAV/ITGB3. This attachment induces virion internalization predominantly through clathrin-dependent endocytosis. Class II fusion protein that promotes fusion of viral membrane with host endosomal membrane after endocytosis of the virion. The chain is Envelope glycoprotein (GP) from Homo sapiens (Human).